The primary structure comprises 158 residues: 2-C-methyl-D-erythritol 2,4-cyclodiphosphate synthase (158 aa).

A divalent metal cation is bound by residues aspartate 8 and histidine 10. 4-CDP-2-C-methyl-D-erythritol 2-phosphate-binding positions include 8–10 (DVH) and 34–35 (HS). Histidine 42 serves as a coordination point for a divalent metal cation. 4-CDP-2-C-methyl-D-erythritol 2-phosphate-binding positions include 56–58 (DIG), 61–65 (FPDTD), 100–106 (AQKPKML), 132–135 (TTEE), phenylalanine 139, and lysine 142.

This sequence belongs to the IspF family. Homotrimer. A divalent metal cation is required as a cofactor.

It carries out the reaction 4-CDP-2-C-methyl-D-erythritol 2-phosphate = 2-C-methyl-D-erythritol 2,4-cyclic diphosphate + CMP. The protein operates within isoprenoid biosynthesis; isopentenyl diphosphate biosynthesis via DXP pathway; isopentenyl diphosphate from 1-deoxy-D-xylulose 5-phosphate: step 4/6. In terms of biological role, involved in the biosynthesis of isopentenyl diphosphate (IPP) and dimethylallyl diphosphate (DMAPP), two major building blocks of isoprenoid compounds. Catalyzes the conversion of 4-diphosphocytidyl-2-C-methyl-D-erythritol 2-phosphate (CDP-ME2P) to 2-C-methyl-D-erythritol 2,4-cyclodiphosphate (ME-CPP) with a corresponding release of cytidine 5-monophosphate (CMP). The polypeptide is 2-C-methyl-D-erythritol 2,4-cyclodiphosphate synthase (Clostridium tetani (strain Massachusetts / E88)).